The chain runs to 200 residues: NADH-quinone oxidoreductase subunit B (200 aa).

Residues Cys-78, Cys-79, Cys-144, and Cys-174 each coordinate [4Fe-4S] cluster.

The protein belongs to the complex I 20 kDa subunit family. In terms of assembly, NDH-1 is composed of 14 different subunits. Subunits NuoB, C, D, E, F, and G constitute the peripheral sector of the complex. [4Fe-4S] cluster is required as a cofactor.

It is found in the cell membrane. The enzyme catalyses a quinone + NADH + 5 H(+)(in) = a quinol + NAD(+) + 4 H(+)(out). Its function is as follows. NDH-1 shuttles electrons from NADH, via FMN and iron-sulfur (Fe-S) centers, to quinones in the respiratory chain. The immediate electron acceptor for the enzyme in this species is believed to be ubiquinone. Couples the redox reaction to proton translocation (for every two electrons transferred, four hydrogen ions are translocated across the cytoplasmic membrane), and thus conserves the redox energy in a proton gradient. The chain is NADH-quinone oxidoreductase subunit B from Dehalococcoides mccartyi (strain CBDB1).